The chain runs to 427 residues: 3-phosphoshikimate 1-carboxyvinyltransferase (427 aa).

Residues Lys20, Ser21, and Arg25 each contribute to the 3-phosphoshikimate site. Residue Lys20 participates in phosphoenolpyruvate binding. Phosphoenolpyruvate is bound by residues Gly92 and Arg120. 3-phosphoshikimate contacts are provided by Ser166, Gln168, Asp312, and Lys339. Gln168 is a binding site for phosphoenolpyruvate. The active-site Proton acceptor is Asp312. The phosphoenolpyruvate site is built by Arg343 and Arg385.

Belongs to the EPSP synthase family. As to quaternary structure, monomer.

It localises to the cytoplasm. The enzyme catalyses 3-phosphoshikimate + phosphoenolpyruvate = 5-O-(1-carboxyvinyl)-3-phosphoshikimate + phosphate. Its pathway is metabolic intermediate biosynthesis; chorismate biosynthesis; chorismate from D-erythrose 4-phosphate and phosphoenolpyruvate: step 6/7. Its function is as follows. Catalyzes the transfer of the enolpyruvyl moiety of phosphoenolpyruvate (PEP) to the 5-hydroxyl of shikimate-3-phosphate (S3P) to produce enolpyruvyl shikimate-3-phosphate and inorganic phosphate. This chain is 3-phosphoshikimate 1-carboxyvinyltransferase, found in Streptococcus pneumoniae serotype 2 (strain D39 / NCTC 7466).